Reading from the N-terminus, the 630-residue chain is tRNA uridine 5-carboxymethylaminomethyl modification enzyme MnmG (630 aa).

13–18 (GGGHAG) lines the FAD pocket. Residue 273–287 (GPRYCPSIEDKVMRF) coordinates NAD(+).

The protein belongs to the MnmG family. Homodimer. Heterotetramer of two MnmE and two MnmG subunits. Requires FAD as cofactor.

It is found in the cytoplasm. Functionally, NAD-binding protein involved in the addition of a carboxymethylaminomethyl (cmnm) group at the wobble position (U34) of certain tRNAs, forming tRNA-cmnm(5)s(2)U34. The sequence is that of tRNA uridine 5-carboxymethylaminomethyl modification enzyme MnmG from Actinobacillus pleuropneumoniae serotype 5b (strain L20).